The chain runs to 541 residues: Glucose-6-phosphate isomerase (541 aa).

The Proton donor role is filled by glutamate 346. Residues histidine 377 and lysine 506 contribute to the active site.

This sequence belongs to the GPI family.

Its subcellular location is the cytoplasm. It catalyses the reaction alpha-D-glucose 6-phosphate = beta-D-fructose 6-phosphate. It functions in the pathway carbohydrate biosynthesis; gluconeogenesis. The protein operates within carbohydrate degradation; glycolysis; D-glyceraldehyde 3-phosphate and glycerone phosphate from D-glucose: step 2/4. In terms of biological role, catalyzes the reversible isomerization of glucose-6-phosphate to fructose-6-phosphate. In Rhizobium leguminosarum bv. trifolii (strain WSM2304), this protein is Glucose-6-phosphate isomerase.